Here is a 658-residue protein sequence, read N- to C-terminus: Protein teflon (658 aa).

The C2H2-type 1 zinc-finger motif lies at 33 to 56 (LYCHFCRDLFTQLPEFLRHLQSNH). Positions 80-131 (DKAHEDAQSAGHNSSSGDSRSLMNSEDSRAIDGSEENSDNSPVKPEQIGKQN) are disordered. A compositionally biased stretch (polar residues) spans 89–104 (AGHNSSSGDSRSLMNS). C2H2-type zinc fingers lie at residues 608 to 630 (YFCKWCDDIFILKKEYLKHLISH) and 634 to 657 (FQCTKCIKVFKYKGYYEKHLRNAH).

Belongs to the Teflon family.

The protein localises to the nucleus. It localises to the chromosome. In terms of biological role, specifically required in males for proper segregation of autosomal bivalents at meiosis I. Expression is required in the male germ line prior to spermatocyte stage S4. May have a role as a bridging molecule maintaining adhesion to hold autosome bivalents together via heterochromatic connections. This chain is Protein teflon, found in Drosophila simulans (Fruit fly).